Reading from the N-terminus, the 172-residue chain is UBA-like domain-containing protein 2 (172 aa).

Residues 118–130 are compositionally biased toward pro residues; that stretch reads PPNQQPVWLPPSS. The segment at 118 to 172 is disordered; sequence PPNQQPVWLPPSSPTGHHTLHHHHHHMHPPPSWPPVSQPANGPQTPVISALHGQR. Over residues 135 to 145 the composition is skewed to basic residues; sequence HTLHHHHHHMH.

This sequence belongs to the UBALD family.

This chain is UBA-like domain-containing protein 2 (ubald2), found in Danio rerio (Zebrafish).